We begin with the raw amino-acid sequence, 200 residues long: COMM domain-containing protein 7 (200 aa).

The 68-residue stretch at 133-200 (QLIDMEWKFG…RVRTSMECFC (68 aa)) folds into the COMM domain.

This sequence belongs to the COMM domain-containing protein 7 family. Component of the commander complex consisting of the CCC subcomplex and the retriever subcomplex. Component of the CCC (COMMD/CCDC22/CCDC93) subcomplex consisting of COMMD1, COMMD2, COMMD3, COMMD4, COMMD5, COMMD6, COMMD7, COMMD8, COMMD9, COMMD10, CCDC22 and CCDC93; within the complex forms a heterodimer with COMMD9. Interacts with RELA. Interacts with CCDC22, CCDC93, SCNN1B, CUL7. In terms of tissue distribution, widely expressed with highest expression in lung.

It localises to the cytoplasmic vesicle. Scaffold protein in the commander complex that is essential for endosomal recycling of transmembrane cargos; the commander complex is composed of the CCC subcomplex and the retriever subcomplex. May modulate activity of cullin-RING E3 ubiquitin ligase (CRL) complexes. Associates with the NF-kappa-B complex and suppresses its transcriptional activity. This is COMM domain-containing protein 7 (COMMD7) from Homo sapiens (Human).